Here is a 233-residue protein sequence, read N- to C-terminus: Ribosome-recycling factor, mitochondrial (233 aa).

This sequence belongs to the RRF family.

It is found in the mitochondrion. Functionally, necessary for protein synthesis in mitochondria. Functions as a ribosome recycling factor in mitochondria. The polypeptide is Ribosome-recycling factor, mitochondrial (RRF1) (Candida glabrata (strain ATCC 2001 / BCRC 20586 / JCM 3761 / NBRC 0622 / NRRL Y-65 / CBS 138) (Yeast)).